Here is a 267-residue protein sequence, read N- to C-terminus: Phosphate import ATP-binding protein PstB (267 aa).

Residues 21 to 262 enclose the ABC transporter domain; sequence VAARNLDFYY…PSKQQTEDYI (242 aa). Position 53-60 (53-60) interacts with ATP; it reads GPSGCGKS.

This sequence belongs to the ABC transporter superfamily. Phosphate importer (TC 3.A.1.7) family. The complex is composed of two ATP-binding proteins (PstB), two transmembrane proteins (PstC and PstA) and a solute-binding protein (PstS).

It localises to the cell inner membrane. It catalyses the reaction phosphate(out) + ATP + H2O = ADP + 2 phosphate(in) + H(+). Its function is as follows. Part of the ABC transporter complex PstSACB involved in phosphate import. Responsible for energy coupling to the transport system. This Xanthomonas campestris pv. campestris (strain 8004) protein is Phosphate import ATP-binding protein PstB.